Consider the following 367-residue polypeptide: Inositol-3-phosphate synthase (367 aa).

NAD(+) is bound by residues D78, A137, Y157, S200, D235, and K248.

It belongs to the myo-inositol 1-phosphate synthase family. Requires NAD(+) as cofactor.

It carries out the reaction D-glucose 6-phosphate = 1D-myo-inositol 3-phosphate. Functionally, key enzyme in myo-inositol biosynthesis pathway that catalyzes the conversion of glucose 6-phosphate to 1D-myo-inositol 3-phosphate in a NAD-dependent manner. The protein is Inositol-3-phosphate synthase (ino1) of Mycobacterium tuberculosis (strain CDC 1551 / Oshkosh).